The primary structure comprises 435 residues: Glutamyl-tRNA reductase (435 aa).

Residues 49–52, S109, 114–116, and Q120 contribute to the substrate site; these read TCNR and EGQ. The active-site Nucleophile is C50. 198-203 provides a ligand contact to NADP(+); it reads GAGRMS.

The protein belongs to the glutamyl-tRNA reductase family. As to quaternary structure, homodimer.

It catalyses the reaction (S)-4-amino-5-oxopentanoate + tRNA(Glu) + NADP(+) = L-glutamyl-tRNA(Glu) + NADPH + H(+). It functions in the pathway porphyrin-containing compound metabolism; protoporphyrin-IX biosynthesis; 5-aminolevulinate from L-glutamyl-tRNA(Glu): step 1/2. It participates in porphyrin-containing compound metabolism; chlorophyll biosynthesis. Its function is as follows. Catalyzes the NADPH-dependent reduction of glutamyl-tRNA(Glu) to glutamate 1-semialdehyde (GSA). In Prochlorococcus marinus (strain MIT 9211), this protein is Glutamyl-tRNA reductase.